The chain runs to 613 residues: Glutaminase 1 (613 aa).

Residues 33-315 (GAVADYIPEL…LSSHYDLHML (283 aa)) form a glutaminase region. The substrate site is built by serine 75, asparagine 124, glutamate 168, asparagine 175, tyrosine 199, tyrosine 251, and valine 269. In terms of domain architecture, STAS spans 345-457 (REILAAHEQE…LDTAIEWAED (113 aa)). 480–595 (LLEGLSADEL…ERIMRNLAQL (116 aa)) is an a nucleoside 3',5'-cyclic phosphate binding site.

This sequence belongs to the glutaminase family. As to quaternary structure, homotetramer.

It catalyses the reaction L-glutamine + H2O = L-glutamate + NH4(+). This Bradyrhizobium diazoefficiens (strain JCM 10833 / BCRC 13528 / IAM 13628 / NBRC 14792 / USDA 110) protein is Glutaminase 1 (glsA1).